We begin with the raw amino-acid sequence, 211 residues long: Transcriptional regulator NarO (211 aa).

Residues 154–205 (LTARQREVLETAHEMGYFEHPREANATEVAAALDINRSTFTEHLSAAQSKLL) form the HTH bat-type domain.

In terms of biological role, activates transcription of the denitrifying genes (nitrate reductase narA and nitrite reductase nirK) under anaerobic conditions. The polypeptide is Transcriptional regulator NarO (Haloferax volcanii (strain ATCC 29605 / DSM 3757 / JCM 8879 / NBRC 14742 / NCIMB 2012 / VKM B-1768 / DS2) (Halobacterium volcanii)).